A 91-amino-acid polypeptide reads, in one-letter code: Small ribosomal subunit protein bS20 (91 aa).

Positions 1-25 (MANTKSAEKRHRQSLKRRARNVTVR) are disordered. A compositionally biased stretch (basic residues) spans 8–20 (EKRHRQSLKRRAR).

Belongs to the bacterial ribosomal protein bS20 family.

Functionally, binds directly to 16S ribosomal RNA. This is Small ribosomal subunit protein bS20 from Myxococcus xanthus (strain DK1622).